A 488-amino-acid polypeptide reads, in one-letter code: Probable malate:quinone oxidoreductase (488 aa).

Belongs to the MQO family. Requires FAD as cofactor.

It catalyses the reaction (S)-malate + a quinone = a quinol + oxaloacetate. It functions in the pathway carbohydrate metabolism; tricarboxylic acid cycle; oxaloacetate from (S)-malate (quinone route): step 1/1. In Neisseria meningitidis serogroup A / serotype 4A (strain DSM 15465 / Z2491), this protein is Probable malate:quinone oxidoreductase.